We begin with the raw amino-acid sequence, 628 residues long: MKWNFMMSHGHQQGRMAITLAALGVVYGDLGTSPLYALKESFAGHLGLQPTPEGILSIVSLFFWTIMIVVSFKYVLLVLRADDKGEGGILTLASLASRRLPAKPRALLMLLGLVGVGLFIGDAVITPAISVLSAVEGLQVITPELAPFVLPITLTVLVILFGAQHYGTAGIGRLFGPIMLLWFGVLAALGAYEIVQNPAILQAVNPLYALDFMVSRPGIAFITLGAVVLCVTGTEALYADMGHFGRGAIQLAWGSLVMPALLLNYFGQGALLLRNPAAIENPFYLLAPSWLAFPLLILATLATVIASQAVISGTYSVVRQAILLGYLPRQEIRHTSEHEIGQIYLPLVNWLLLGGIIIVIIWFQSSSNLAAAYGIAVTGTMALTTLLLMVVAARRWKWSRWLIALICAPLLLVDVTFFAANTTKFLAGGWLPILFALLAIIVMTTWKRGRELVLDKLEHKSLALKGFVDNMQAHPPLQVPGTAVFLSKSVQVVPHAMLHNLKHNKILHERVIFLTVQIKDEPWLSFKERIELTHLGEGFWQVVAHFGYKEVPSMEEIFQACAQEDLKVTMAKTSFFLSHENLVSTDLPGMARWREGLFVWMNRNSLKATDFFHIPANRVVELGVLLEL.

The next 12 helical transmembrane spans lie at 18-38, 58-78, 106-126, 141-161, 175-195, 219-239, 253-273, 285-305, 343-363, 371-391, 401-421, and 425-445; these read ITLA…LYAL, IVSL…VLLV, ALLM…AVIT, ITPE…VILF, FGPI…YEIV, IAFI…ALYA, WGSL…ALLL, LLAP…ATVI, IYLP…IIWF, AAYG…LMVV, WLIA…FAAN, and FLAG…VMTT.

This sequence belongs to the HAK/KUP transporter (TC 2.A.72) family.

The protein resides in the cell inner membrane. The enzyme catalyses K(+)(in) + H(+)(in) = K(+)(out) + H(+)(out). Transport of potassium into the cell. Likely operates as a K(+):H(+) symporter. The sequence is that of Probable potassium transport system protein Kup 1 from Aeromonas hydrophila subsp. hydrophila (strain ATCC 7966 / DSM 30187 / BCRC 13018 / CCUG 14551 / JCM 1027 / KCTC 2358 / NCIMB 9240 / NCTC 8049).